A 377-amino-acid chain; its full sequence is tRNA(Met) cytidine acetate ligase (377 aa).

Residues 7 to 20 (VTEY…HLYH), Gly-100, Asn-153, and Arg-178 contribute to the ATP site.

The protein belongs to the TmcAL family.

Its subcellular location is the cytoplasm. The enzyme catalyses cytidine(34) in elongator tRNA(Met) + acetate + ATP = N(4)-acetylcytidine(34) in elongator tRNA(Met) + AMP + diphosphate. Its function is as follows. Catalyzes the formation of N(4)-acetylcytidine (ac(4)C) at the wobble position of elongator tRNA(Met), using acetate and ATP as substrates. First activates an acetate ion to form acetyladenylate (Ac-AMP) and then transfers the acetyl group to tRNA to form ac(4)C34. The sequence is that of tRNA(Met) cytidine acetate ligase from Staphylococcus saprophyticus subsp. saprophyticus (strain ATCC 15305 / DSM 20229 / NCIMB 8711 / NCTC 7292 / S-41).